Reading from the N-terminus, the 155-residue chain is MSKITEQVEVIVQPIMEDLNFELVDVEYVKEGRDHFLRISIDKEGGVDLNDCTLASEKISEAMDANDPIPEMYYLDVASPGAERPIKKEQDFQNAITKPVFVSLYVPIEGEKEWLGILQEVNNETIVVQVKIKARTKDIEIPRDKIAKARHAVMI.

The protein belongs to the RimP family.

It is found in the cytoplasm. In terms of biological role, required for maturation of 30S ribosomal subunits. This chain is Ribosome maturation factor RimP, found in Staphylococcus aureus (strain JH9).